The sequence spans 319 residues: Formimidoylglutamase (319 aa).

Mn(2+) is bound by residues histidine 131, aspartate 154, histidine 156, aspartate 158, cysteine 248, and aspartate 250.

It belongs to the arginase family. Mn(2+) is required as a cofactor.

It catalyses the reaction N-formimidoyl-L-glutamate + H2O = formamide + L-glutamate. Its pathway is amino-acid degradation; L-histidine degradation into L-glutamate; L-glutamate from N-formimidoyl-L-glutamate (hydrolase route): step 1/1. In terms of biological role, catalyzes the conversion of N-formimidoyl-L-glutamate to L-glutamate and formamide. The chain is Formimidoylglutamase from Legionella pneumophila subsp. pneumophila (strain Philadelphia 1 / ATCC 33152 / DSM 7513).